Reading from the N-terminus, the 451-residue chain is UDP-N-acetylmuramate--L-alanine ligase (451 aa).

110-116 provides a ligand contact to ATP; that stretch reads GTHGKTT.

The protein belongs to the MurCDEF family.

The protein localises to the cytoplasm. The catalysed reaction is UDP-N-acetyl-alpha-D-muramate + L-alanine + ATP = UDP-N-acetyl-alpha-D-muramoyl-L-alanine + ADP + phosphate + H(+). It participates in cell wall biogenesis; peptidoglycan biosynthesis. Its function is as follows. Cell wall formation. The polypeptide is UDP-N-acetylmuramate--L-alanine ligase (Francisella tularensis subsp. mediasiatica (strain FSC147)).